Reading from the N-terminus, the 151-residue chain is Prefoldin subunit 5 (151 aa).

Residues I15–S35 are a coiled coil.

It belongs to the prefoldin subunit alpha family. Heterohexamer of two PFD-alpha type and four PFD-beta type subunits forming prefoldin co-chaperone complex. Interacts with PFD6. Binds to the DELLA protein GAI.

Its subcellular location is the cytoplasm. The protein resides in the nucleus. In terms of biological role, binds specifically to cytosolic chaperonin (c-CPN) and transfers target proteins to it. Binds to nascent polypeptide chain and promotes folding in an environment in which there are many competing pathways for nonnative proteins. Together with other chaperonins, contribute to the regulation of gene expression by modulating the spliceosome function on pre-mRNA splicing post-transcriptionally by acting as a co-chaperone of Hsp90 to control levels of LSM8. Required for the biogenesis of tubulins and for subsequent microtubules (MTs) organization and dynamicity. Necessary for tolerance to NaCl salt stress. Involved in the process leading to microtubules dissociation in response to gibberellic acid (GA) probably due to the DELLA proteins-mediated translocation of the prefoldin co-chaperone complex from the cytoplasm to the nucleus. Prevents cold acclimation (e.g. 7 days at 4 degrees Celsius) in a DELLA proteins-dependent manner by promoting nuclear proteasome-mediated HY5 degradation, thus modulating the expression of several genes and reducing anthocyanin biosynthesis, but seems not involved in constitutive freezing tolerance. Contributes to the GA-dependent regulation of PIN2 trafficking at the plasma membrane, thus influencing auxin flux. The polypeptide is Prefoldin subunit 5 (Arabidopsis thaliana (Mouse-ear cress)).